We begin with the raw amino-acid sequence, 468 residues long: ERO1-like protein alpha (468 aa).

The signal sequence occupies residues 1 to 23 (MGRRWGFLIGFLVAVGLLGLGHG). Disulfide bonds link Cys-35–Cys-48, Cys-37–Cys-46, Cys-85–Cys-391, Cys-94–Cys-99, Cys-94–Cys-131, Cys-99–Cys-104, Cys-208–Cys-241, and Cys-394–Cys-397. Phosphoserine is present on residues Ser-106, Ser-143, and Ser-145. FAD-binding residues include Arg-187, Thr-189, and Trp-200. Ser-252 and His-255 together coordinate FAD. An N-linked (GlcNAc...) asparagine glycan is attached at Asn-280. FAD is bound by residues Arg-287 and Arg-300. Asn-384 carries N-linked (GlcNAc...) asparagine glycosylation.

The protein belongs to the EROs family. As to quaternary structure, predominantly monomer. May function both as a monomer and a homodimer. Interacts with PDILT. Interacts with ERP44; the interaction results in retention of ERO1A in the endoplasmic reticulum. It depends on FAD as a cofactor. Post-translationally, the Cys-94/Cys-99 and Cys-394/Cys-397 disulfide bonds constitute the redox-active center. The Cys-94/Cys-99 disulfide bond may accept electron from P4HB and funnel them to the active site disulfide Cys-394/Cys-397. The regulatory Cys-99/Cys-104 disulfide bond stabilizes the other regulatory bond Cys-94/Cys-131. In terms of processing, phosphorylated on Ser-145 by FAM20C in the Golgi which increases its enzymatic activity. Phosphorylation is induced by lactation. It is also induced by hypoxia and reductive stress.

Its subcellular location is the endoplasmic reticulum membrane. The protein resides in the golgi apparatus lumen. The protein localises to the secreted. It localises to the cell projection. It is found in the dendrite. With respect to regulation, enzyme activity is tightly regulated to prevent the accumulation of reactive oxygen species in the endoplasmic reticulum. Reversibly down-regulated by the formation of disulfide bonds between the active site Cys-94 and Cys-131, and between Cys-99 and Cys-104. Glutathione may be required to regulate its activity in the endoplasmic reticulum. In terms of biological role, oxidoreductase involved in disulfide bond formation in the endoplasmic reticulum. Efficiently reoxidizes P4HB/PDI, the enzyme catalyzing protein disulfide formation, in order to allow P4HB to sustain additional rounds of disulfide formation. Following P4HB reoxidation, passes its electrons to molecular oxygen via FAD, leading to the production of reactive oxygen species (ROS) in the cell. Required for the proper folding of immunoglobulins. Plays an important role in ER stress-induced, CHOP-dependent apoptosis by activating the inositol 1,4,5-trisphosphate receptor IP3R1. The chain is ERO1-like protein alpha from Bos taurus (Bovine).